A 189-amino-acid polypeptide reads, in one-letter code: Elongation factor P (189 aa).

This sequence belongs to the elongation factor P family.

It localises to the cytoplasm. Its pathway is protein biosynthesis; polypeptide chain elongation. In terms of biological role, involved in peptide bond synthesis. Stimulates efficient translation and peptide-bond synthesis on native or reconstituted 70S ribosomes in vitro. Probably functions indirectly by altering the affinity of the ribosome for aminoacyl-tRNA, thus increasing their reactivity as acceptors for peptidyl transferase. The chain is Elongation factor P from Xanthobacter autotrophicus (strain ATCC BAA-1158 / Py2).